Reading from the N-terminus, the 307-residue chain is Heme A synthase (307 aa).

Over Met1–Lys8 the chain is Cytoplasmic. A helical transmembrane segment spans residues Trp9 to Thr29. Residues Lys30–Glu56 lie on the Extracellular side of the membrane. Cys37 and Cys44 are disulfide-bonded. A helical membrane pass occupies residues Val57–Leu77. The active site involves Glu60. His63 serves as a coordination point for heme o. The Cytoplasmic portion of the chain corresponds to Thr78–Lys92. The helical transmembrane segment at Leu93–Val113 threads the bilayer. The Extracellular portion of the chain corresponds to Leu114–Ala123. Residues Leu124–Phe144 form a helical membrane-spanning segment. His125 serves as a coordination point for heme o. Over Glu145–Leu161 the chain is Cytoplasmic. A helical membrane pass occupies residues Arg162 to Val182. Residues Arg183–Arg218 are Extracellular-facing. Cys191 and Cys197 form a disulfide bridge. Residue His217 participates in heme b binding. Residues Leu219–Tyr239 traverse the membrane as a helical segment. Over Lys240 to Tyr247 the chain is Cytoplasmic. A helical membrane pass occupies residues Gly248–Leu268. Topologically, residues Thr269–Ala276 are extracellular. Residues Leu277–Val297 form a helical membrane-spanning segment. Position 279 (His279) interacts with heme b. Over Ala298–Lys307 the chain is Cytoplasmic.

This sequence belongs to the COX15/CtaA family. Type 1 subfamily. As to quaternary structure, interacts with CtaB. Requires heme b as cofactor.

The protein resides in the cell membrane. It carries out the reaction Fe(II)-heme o + 2 A + H2O = Fe(II)-heme a + 2 AH2. It participates in porphyrin-containing compound metabolism; heme A biosynthesis; heme A from heme O: step 1/1. Its function is as follows. Catalyzes the conversion of heme O to heme A by two successive hydroxylations of the methyl group at C8. The first hydroxylation forms heme I, the second hydroxylation results in an unstable dihydroxymethyl group, which spontaneously dehydrates, resulting in the formyl group of heme A. The chain is Heme A synthase from Lysinibacillus sphaericus (strain C3-41).